Here is a 205-residue protein sequence, read N- to C-terminus: MTEFESAPAYQEAKYLTSAAEFDQLPPDQGAEIAFIGRSNAGKSSALNIITGIKGLARTSKTPGRTQMINFFALNEHERLVDLPGYGYAKVPRMVQKRWEELVDSYLKNRRCLKGLVVVMDIRHPLKEMDEDVIEWAVNYDIPIHILLTKSDKLSQNAAKKTLGEVQTAISAYGEKLTLQLFSSHDRTGLDEVKAVLSQWFRSEP.

The EngB-type G domain occupies 29–203 (QGAEIAFIGR…KAVLSQWFRS (175 aa)). GTP-binding positions include 37-44 (GRSNAGKS), 64-68 (GRTQM), 82-85 (DLPG), 149-152 (TKSD), and 182-184 (FSS). Positions 44 and 66 each coordinate Mg(2+).

Belongs to the TRAFAC class TrmE-Era-EngA-EngB-Septin-like GTPase superfamily. EngB GTPase family. Mg(2+) serves as cofactor.

Necessary for normal cell division and for the maintenance of normal septation. The sequence is that of Probable GTP-binding protein EngB from Coxiella burnetii (strain RSA 331 / Henzerling II).